Reading from the N-terminus, the 510-residue chain is Serine/threonine-protein kinase UL13 homolog (510 aa).

The tract at residues 1–63 is disordered; the sequence is MDADDTPPNL…WANPSTATCM (63 aa). The Protein kinase domain maps to 132 to 458; sequence RDRPRFAGRG…RRIFQCHAVR (327 aa). ATP is bound by residues 138-146 and Lys157; that span reads AGRGTYGRV. Asp257 serves as the catalytic Proton acceptor.

The protein belongs to the protein kinase superfamily. Ser/Thr protein kinase family. Post-translationally, autophosphorylated.

The protein localises to the virion tegument. It is found in the host nucleus. It catalyses the reaction L-seryl-[protein] + ATP = O-phospho-L-seryl-[protein] + ADP + H(+). The enzyme catalyses L-threonyl-[protein] + ATP = O-phospho-L-threonyl-[protein] + ADP + H(+). Multifunctional serine/threonine kinase that plays a role in several processes including egress of virus particles from the nucleus, modulation of the actin cytoskeleton and regulation of viral and cellular gene expression. Regulates the nuclear localization of viral envelopment factor proteins 24 and 27, by phosphorylating the protein kinase ORF66, indicating a role in nuclear egress. Disrupts host nuclear lamins, including LMNA and LMNB1. Phosphorylates the viral Fc receptor composed of glycoproteins E (gE) and I (gI). Phosphorylation of glycoprotein E (gE) by UL13 alters its subcellular localization, from the host early endosome to the plasma membrane. Participates in the transcriptional regulation of cellular and viral mRNAs mainly by phosphorylating the viral transcriptional regulator IE63. This chain is Serine/threonine-protein kinase UL13 homolog, found in Varicella-zoster virus (strain Dumas) (HHV-3).